Here is a 336-residue protein sequence, read N- to C-terminus: Cytosolic Fe-S cluster assembly factor NBP35 (336 aa).

The segment at 1–20 is disordered; it reads MIATQRPFPIPSPVPLAPSS. Residues cysteine 35, cysteine 49, cysteine 52, and cysteine 58 each contribute to the [4Fe-4S] cluster site. 88–95 lines the ATP pocket; that stretch reads GKGGVGKS. [4Fe-4S] cluster is bound by residues cysteine 261 and cysteine 264.

The protein belongs to the Mrp/NBP35 ATP-binding proteins family. NUBP1/NBP35 subfamily. In terms of assembly, heterotetramer of 2 NBP35 and 2 CFD1 chains. Requires [4Fe-4S] cluster as cofactor.

It localises to the cytoplasm. Component of the cytosolic iron-sulfur (Fe/S) protein assembly (CIA) machinery. Required for maturation of extramitochondrial Fe-S proteins. The NBP35-CFD1 heterotetramer forms a Fe-S scaffold complex, mediating the de novo assembly of an Fe-S cluster and its transfer to target apoproteins. The protein is Cytosolic Fe-S cluster assembly factor NBP35 of Cryptococcus neoformans var. neoformans serotype D (strain B-3501A) (Filobasidiella neoformans).